The sequence spans 423 residues: Histidine--tRNA ligase (423 aa).

This sequence belongs to the class-II aminoacyl-tRNA synthetase family. As to quaternary structure, homodimer.

It localises to the cytoplasm. The catalysed reaction is tRNA(His) + L-histidine + ATP = L-histidyl-tRNA(His) + AMP + diphosphate + H(+). In Prochlorococcus marinus (strain MIT 9211), this protein is Histidine--tRNA ligase.